The following is a 317-amino-acid chain: Transaldolase (317 aa).

Residue Lys-131 is the Schiff-base intermediate with substrate of the active site.

The protein belongs to the transaldolase family. Type 1 subfamily. In terms of assembly, homodimer.

The protein resides in the cytoplasm. It catalyses the reaction D-sedoheptulose 7-phosphate + D-glyceraldehyde 3-phosphate = D-erythrose 4-phosphate + beta-D-fructose 6-phosphate. Its pathway is carbohydrate degradation; pentose phosphate pathway; D-glyceraldehyde 3-phosphate and beta-D-fructose 6-phosphate from D-ribose 5-phosphate and D-xylulose 5-phosphate (non-oxidative stage): step 2/3. Transaldolase is important for the balance of metabolites in the pentose-phosphate pathway. The polypeptide is Transaldolase (Baumannia cicadellinicola subsp. Homalodisca coagulata).